The primary structure comprises 541 residues: Tyrosine-protein kinase Yes (541 aa).

The segment covering 1–10 (MGCIKSKENK) has biased composition (basic and acidic residues). The interval 1 to 29 (MGCIKSKENKSPAIKYTPENPTEPVNTSA) is disordered. Glycine 2 carries the N-myristoyl glycine lipid modification. The S-palmitoyl cysteine; in membrane form moiety is linked to residue cysteine 3. The segment covering 19 to 29 (ENPTEPVNTSA) has biased composition (polar residues). At tyrosine 32 the chain carries Phosphotyrosine. In terms of domain architecture, SH3 spans 89–150 (GGVTIFVALY…PSNYVAPADS (62 aa)). Residues 156–253 (WYFGKMGRKD…GLCHKLTTVC (98 aa)) form the SH2 domain. In terms of domain architecture, Protein kinase spans 275 to 528 (LRLEVKLGQG…YIQSFLEDYF (254 aa)). ATP contacts are provided by residues 281-289 (LGQGCFGEV) and lysine 303. A phosphotyrosine mark is found at tyrosine 334 and tyrosine 343. Aspartate 394 acts as the Proton acceptor in catalysis. Residue tyrosine 424 is modified to Phosphotyrosine; by autocatalysis. Tyrosine 535 carries the phosphotyrosine modification.

In terms of assembly, interacts with YAP1 and CSF1R. Interacts with FASLG. Interacts with CTNND1; this interaction allows YES1-mediated activation of FYN and FER and subsequent phosphorylation of CTNND1. Interacts with IL6ST/gp130. Interacts with SCRIB, when YES1 is in a closed conformation; the interaction facilitates YES1 autophosphorylation. Post-translationally, phosphorylated. Phosphorylation by CSK on the C-terminal tail maintains the enzyme in an inactive state. Autophosphorylation at Tyr-424 maintains enzyme activity by blocking CSK-mediated inhibition. In terms of processing, palmitoylation at Cys-3 promotes membrane localization.

The protein resides in the cell membrane. The protein localises to the cytoplasm. It is found in the cytoskeleton. It localises to the microtubule organizing center. Its subcellular location is the centrosome. The protein resides in the cytosol. The protein localises to the cell junction. It carries out the reaction L-tyrosyl-[protein] + ATP = O-phospho-L-tyrosyl-[protein] + ADP + H(+). Its function is as follows. Non-receptor protein tyrosine kinase that is involved in the regulation of cell growth and survival, apoptosis, cell-cell adhesion, cytoskeleton remodeling, and differentiation. Stimulation by receptor tyrosine kinases (RTKs) including EGFR, PDGFR, CSF1R and FGFR leads to recruitment of YES1 to the phosphorylated receptor, and activation and phosphorylation of downstream substrates. Upon EGFR activation, promotes the phosphorylation of PARD3 to favor epithelial tight junction assembly. Participates in the phosphorylation of specific junctional components such as CTNND1 by stimulating the FYN and FER tyrosine kinases at cell-cell contacts. Upon T-cell stimulation by CXCL12, phosphorylates collapsin response mediator protein 2/DPYSL2 and induces T-cell migration. Participates in CD95L/FASLG signaling pathway and mediates AKT-mediated cell migration. Plays a role in cell cycle progression by phosphorylating the cyclin dependent kinase 4/CDK4 thus regulating the G1 phase. Also involved in G2/M progression and cytokinesis. Catalyzes phosphorylation of organic cation transporter OCT2 which induces its transport activity. The protein is Tyrosine-protein kinase Yes (Yes1) of Rattus norvegicus (Rat).